The chain runs to 406 residues: Dual-specificity RNA methyltransferase RlmN (406 aa).

Glu121 acts as the Proton acceptor in catalysis. Residues 127-377 (ERDRGTLCVS…VRTPRGRDIL (251 aa)) enclose the Radical SAM core domain. Cys134 and Cys380 form a disulfide bridge. The [4Fe-4S] cluster site is built by Cys141, Cys145, and Cys148. Residues 206 to 207 (GE), Ser238, 260 to 262 (SLH), and Asn337 each bind S-adenosyl-L-methionine. Cys380 functions as the S-methylcysteine intermediate in the catalytic mechanism.

This sequence belongs to the radical SAM superfamily. RlmN family. Requires [4Fe-4S] cluster as cofactor.

It localises to the cytoplasm. It catalyses the reaction adenosine(2503) in 23S rRNA + 2 reduced [2Fe-2S]-[ferredoxin] + 2 S-adenosyl-L-methionine = 2-methyladenosine(2503) in 23S rRNA + 5'-deoxyadenosine + L-methionine + 2 oxidized [2Fe-2S]-[ferredoxin] + S-adenosyl-L-homocysteine. The enzyme catalyses adenosine(37) in tRNA + 2 reduced [2Fe-2S]-[ferredoxin] + 2 S-adenosyl-L-methionine = 2-methyladenosine(37) in tRNA + 5'-deoxyadenosine + L-methionine + 2 oxidized [2Fe-2S]-[ferredoxin] + S-adenosyl-L-homocysteine. Functionally, specifically methylates position 2 of adenine 2503 in 23S rRNA and position 2 of adenine 37 in tRNAs. m2A2503 modification seems to play a crucial role in the proofreading step occurring at the peptidyl transferase center and thus would serve to optimize ribosomal fidelity. This chain is Dual-specificity RNA methyltransferase RlmN, found in Azorhizobium caulinodans (strain ATCC 43989 / DSM 5975 / JCM 20966 / LMG 6465 / NBRC 14845 / NCIMB 13405 / ORS 571).